The chain runs to 424 residues: MQMAGRGANRRGQHRSPVLVRPPDAEWSMRTFGVEEELLIVDPVTGEPLALADALLAGQDEPTSGLSHELKLEQIETQTRPCHSYGELLQQIRRGRAMANQAARQHGARVAAIATSPLASNTHTTPDPRYAAMLDRFGIIATEQLTCGFHVHTSVESPEEGVVVLDHIRDKLAVLTALTANSPYWRGLPTGFDSYRTQAWNRWPTSGPSSVFGSLTAYRRIVKRLLETGVIMDEGMIYFDARISRNHPTVEVRVADVCLRAEDAALMAVLVRALVETASLEMLDGVEPTAVPTALLRMASWQASNSGLRGDLLDFGDFLPQPAADVVWALVDYLSPVLDDQGELELVKAGISDVLDRGNGAHEQRETAVRYNKRQHDGQTQPGSPPTNEALAAVVGHAAKVTVRGAAADAHKDPAPMLTRVRRP.

Disordered regions lie at residues 1-20 and 405-424; these read MQMA…PVLV and GAAA…VRRP.

This sequence belongs to the glutamate--cysteine ligase type 2 family. YbdK subfamily.

The catalysed reaction is L-cysteine + L-glutamate + ATP = gamma-L-glutamyl-L-cysteine + ADP + phosphate + H(+). Functionally, ATP-dependent carboxylate-amine ligase which exhibits weak glutamate--cysteine ligase activity. This is Putative glutamate--cysteine ligase 2-3 from Paenarthrobacter aurescens (strain TC1).